Here is a 370-residue protein sequence, read N- to C-terminus: ATP synthase gamma chain, chloroplastic (370 aa).

The transit peptide at 1 to 54 directs the protein to the chloroplast; that stretch reads MRSFCIAALLAVASAFTTQPTSFTVKTANVGERASGVFPEQSSAHRTRKATIVM. Cys145 is a catalytic residue.

It belongs to the ATPase gamma chain family. In terms of assembly, F-type ATPases have 2 components, CF(1) - the catalytic core - and CF(0) - the membrane proton channel. CF(1) has five subunits: alpha(3), beta(3), gamma(1), delta(1), epsilon(1). CF(0) has four main subunits: a, b, b' and c.

It is found in the plastid. It localises to the chloroplast thylakoid membrane. Produces ATP from ADP in the presence of a proton gradient across the membrane. The gamma chain is believed to be important in regulating ATPase activity and the flow of protons through the CF(0) complex. The sequence is that of ATP synthase gamma chain, chloroplastic (ATPC) from Phaeodactylum tricornutum (Diatom).